A 249-amino-acid polypeptide reads, in one-letter code: Deoxyribose-phosphate aldolase (249 aa).

The Proton donor/acceptor role is filled by D94. K158 functions as the Schiff-base intermediate with acetaldehyde in the catalytic mechanism. Residue K200 is the Proton donor/acceptor of the active site.

Belongs to the DeoC/FbaB aldolase family. DeoC type 1 subfamily.

It localises to the cytoplasm. The catalysed reaction is 2-deoxy-D-ribose 5-phosphate = D-glyceraldehyde 3-phosphate + acetaldehyde. It participates in carbohydrate degradation; 2-deoxy-D-ribose 1-phosphate degradation; D-glyceraldehyde 3-phosphate and acetaldehyde from 2-deoxy-alpha-D-ribose 1-phosphate: step 2/2. Functionally, catalyzes a reversible aldol reaction between acetaldehyde and D-glyceraldehyde 3-phosphate to generate 2-deoxy-D-ribose 5-phosphate. The sequence is that of Deoxyribose-phosphate aldolase from Thermoplasma volcanium (strain ATCC 51530 / DSM 4299 / JCM 9571 / NBRC 15438 / GSS1).